Consider the following 326-residue polypeptide: UDP-N-acetylglucosamine transporter (326 aa).

Transmembrane regions (helical) follow at residues N4 to M24, L38 to V58, L136 to W156, F174 to F194, L212 to V232, Q243 to I263, I269 to W289, and F293 to Y313.

It belongs to the nucleotide-sugar transporter family. SLC35A subfamily. As to quaternary structure, interacts with SLC35A2; the interaction is reduced in the presence of SLC35A4. Found in a complex with SLC35A2 and SLC35A4. Interacts with MGAT4B. Post-translationally, O-Glcnacylation regulates the stability of SLC35A3 and the specific complex formation with MGAT4B.

Its subcellular location is the golgi apparatus membrane. It catalyses the reaction UMP(out) + UDP-N-acetyl-alpha-D-glucosamine(in) = UMP(in) + UDP-N-acetyl-alpha-D-glucosamine(out). Transports diphosphate-N-acetylglucosamine (UDP-GlcNAc) from the cytosol into the lumen of the Golgi apparatus, functioning as an antiporter that exchanges UDP-N-acetyl-alpha-D-glucosamine for UMP. May supply UDP-GlcNAc as substrate for Golgi-resident glycosyltransferases that generate highly branched, multiantennary complex N-glycans and keratan sulfate. However, the exact role of SLC35A3 still needs to be elucidated, it could be a member of a catalytically more efficient multiprotein complex rather than function independently as a single transporter. The sequence is that of UDP-N-acetylglucosamine transporter (Slc35a3) from Rattus norvegicus (Rat).